The sequence spans 397 residues: Serine/threonine-protein kinase 17A (397 aa).

Positions 1-23 (MIPLEKPGSGGSPSAAASGSGPG) are disordered. Phosphoserine is present on Ser9. In terms of domain architecture, Protein kinase spans 44–304 (LSPGRELGRG…AEECLKHPWL (261 aa)). ATP contacts are provided by residues 50 to 58 (LGRGKFAVV) and Lys73. The active-site Proton acceptor is the Asp169.

This sequence belongs to the protein kinase superfamily. CAMK Ser/Thr protein kinase family. DAP kinase subfamily. In terms of processing, autophosphorylated. Highly expressed in bone marrow. Lower levels in brain, heart, lung, liver and kidney.

It is found in the nucleus. The catalysed reaction is L-seryl-[protein] + ATP = O-phospho-L-seryl-[protein] + ADP + H(+). The enzyme catalyses L-threonyl-[protein] + ATP = O-phospho-L-threonyl-[protein] + ADP + H(+). With respect to regulation, inhibited by thiazolidinedione-type compounds: inhibited by furan- and pyridone- thiazolidinediones. Functionally, acts as a positive regulator of apoptosis. May also act as a regulator of cellular reactive oxygen species. This is Serine/threonine-protein kinase 17A (STK17A) from Oryctolagus cuniculus (Rabbit).